Consider the following 240-residue polypeptide: Pyridoxine 5'-phosphate synthase (240 aa).

Asparagine 7 serves as a coordination point for 3-amino-2-oxopropyl phosphate. 9-10 (DH) is a binding site for 1-deoxy-D-xylulose 5-phosphate. Arginine 18 is a binding site for 3-amino-2-oxopropyl phosphate. Catalysis depends on histidine 43, which acts as the Proton acceptor. Arginine 45 and histidine 50 together coordinate 1-deoxy-D-xylulose 5-phosphate. Glutamate 70 serves as the catalytic Proton acceptor. Threonine 100 lines the 1-deoxy-D-xylulose 5-phosphate pocket. Catalysis depends on histidine 191, which acts as the Proton donor. Residues glycine 192 and 213–214 (GH) contribute to the 3-amino-2-oxopropyl phosphate site.

Belongs to the PNP synthase family. In terms of assembly, homooctamer; tetramer of dimers.

The protein resides in the cytoplasm. The enzyme catalyses 3-amino-2-oxopropyl phosphate + 1-deoxy-D-xylulose 5-phosphate = pyridoxine 5'-phosphate + phosphate + 2 H2O + H(+). It functions in the pathway cofactor biosynthesis; pyridoxine 5'-phosphate biosynthesis; pyridoxine 5'-phosphate from D-erythrose 4-phosphate: step 5/5. Functionally, catalyzes the complicated ring closure reaction between the two acyclic compounds 1-deoxy-D-xylulose-5-phosphate (DXP) and 3-amino-2-oxopropyl phosphate (1-amino-acetone-3-phosphate or AAP) to form pyridoxine 5'-phosphate (PNP) and inorganic phosphate. In Cyanothece sp. (strain PCC 7425 / ATCC 29141), this protein is Pyridoxine 5'-phosphate synthase.